Reading from the N-terminus, the 293-residue chain is MTENNDIKMVIITGMSGAGKTVALQSFEDLGYFCVDNLPPMLLPKFIELMADSKGKMNKVALGVDLRGREFFEHLWGALDDLSERTWIIPHILFLDAKDSTLVTRYKETRRSHPLAPTGLPLKGIEIERSLLTDMKARANIVLDTSDLKPKELREKIVHLFSTETEQAFRVNVMSFGFKYGIPIDADLVFDVRFLPNPYYIPHMKPLTGLDEEVSSYVLKFNETHKFLEKLTDLITFMLPHYKREGKSQLVIAIGCTGGQHRSVTLTEYLGKHLKPEYSVHVSHRDVEKRKGH.

Position 14–21 (14–21 (GMSGAGKT)) interacts with ATP. 65 to 68 (DLRG) contributes to the GTP binding site.

Belongs to the RapZ-like family.

In terms of biological role, displays ATPase and GTPase activities. This Bacillus anthracis protein is Nucleotide-binding protein BA_5384/GBAA_5384/BAS5004.